Consider the following 432-residue polypeptide: Adenylosuccinate synthetase (432 aa).

Residues 13-19 and 41-43 each bind GTP; these read GDEGKGK and GHT. Asp14 (proton acceptor) is an active-site residue. Mg(2+) contacts are provided by Asp14 and Gly41. IMP contacts are provided by residues 14–17, 39–42, Thr130, Arg144, Gln225, Thr240, and Arg304; these read DEGK and NAGH. The Proton donor role is filled by His42. 300 to 306 serves as a coordination point for substrate; the sequence is ATTGRRR. GTP contacts are provided by residues Arg306, 332–334, and 415–417; these read KLD and STG.

Belongs to the adenylosuccinate synthetase family. As to quaternary structure, homodimer. It depends on Mg(2+) as a cofactor.

Its subcellular location is the cytoplasm. It catalyses the reaction IMP + L-aspartate + GTP = N(6)-(1,2-dicarboxyethyl)-AMP + GDP + phosphate + 2 H(+). It functions in the pathway purine metabolism; AMP biosynthesis via de novo pathway; AMP from IMP: step 1/2. Functionally, plays an important role in the de novo pathway of purine nucleotide biosynthesis. Catalyzes the first committed step in the biosynthesis of AMP from IMP. The chain is Adenylosuccinate synthetase from Klebsiella pneumoniae (strain 342).